We begin with the raw amino-acid sequence, 337 residues long: MIRVAINGFGRIGRNFARCWLGRENSNIELVAVNDTSDPRTNAHLLKYDSMLGKLKNVDITADDNSITVNGKTIKCVSDRNPENLPWKEWEIDLIIESTGVFTSKEGALKHVNAGAKKVLITAPGKNEDGTFVIGVNHHDYDHNVHHIISNASCTTNCLAPIAKVLNDKFGIIKGSMTTTHSYTGDQRLLDASHRDLRRARAAAINIVPTSTGAAKAVALVIPELKGKLNGVALRVPTPNVSMVDFVVQVEKRTITEEVNQALKDASEGPLKGILDYSELQLVSSDYQGTDASSIVDASLTLVMGNDLVKVMAWYDNEWGYSQRVLDLAELVAEKWV.

NADP(+) contacts are provided by residues 11-12 (RI), Asp-35, Arg-80, and Thr-122. Residues 153-155 (SCT), Thr-184, Arg-199, 212-213 (TG), and Arg-235 contribute to the D-glyceraldehyde 3-phosphate site. The Nucleophile role is filled by Cys-154. Position 317 (Asn-317) interacts with NADP(+).

It belongs to the glyceraldehyde-3-phosphate dehydrogenase family. In terms of assembly, homotetramer.

The protein resides in the cytoplasm. The catalysed reaction is D-glyceraldehyde 3-phosphate + phosphate + NADP(+) = (2R)-3-phospho-glyceroyl phosphate + NADPH + H(+). It carries out the reaction D-glyceraldehyde 3-phosphate + phosphate + NAD(+) = (2R)-3-phospho-glyceroyl phosphate + NADH + H(+). It functions in the pathway carbohydrate biosynthesis; Calvin cycle. Its function is as follows. Gap2 has a major role in carbon fixation as a component of the Calvin cycle. Catalyzes the oxidative phosphorylation of glyceraldehyde 3-phosphate (G3P) to 1,3-bisphosphoglycerate (BPG) using the cofactor NAD. The first reaction step involves the formation of a hemiacetal intermediate between G3P and a cysteine residue, and this hemiacetal intermediate is then oxidized to a thioester, with concomitant reduction of NAD to NADH. The reduced NADH is then exchanged with the second NAD, and the thioester is attacked by a nucleophilic inorganic phosphate to produce BPG. This Trichormus variabilis (strain ATCC 29413 / PCC 7937) (Anabaena variabilis) protein is Glyceraldehyde-3-phosphate dehydrogenase 2 (gap2).